The primary structure comprises 69 residues: Large ribosomal subunit protein bL28 (69 aa).

This sequence belongs to the bacterial ribosomal protein bL28 family.

The chain is Large ribosomal subunit protein bL28 from Oleidesulfovibrio alaskensis (strain ATCC BAA-1058 / DSM 17464 / G20) (Desulfovibrio alaskensis).